A 213-amino-acid chain; its full sequence is ATP-dependent Clp protease proteolytic subunit (213 aa).

The active-site Nucleophile is S114. H139 is an active-site residue.

The protein belongs to the peptidase S14 family. In terms of assembly, fourteen ClpP subunits assemble into 2 heptameric rings which stack back to back to give a disk-like structure with a central cavity, resembling the structure of eukaryotic proteasomes.

It localises to the cytoplasm. The enzyme catalyses Hydrolysis of proteins to small peptides in the presence of ATP and magnesium. alpha-casein is the usual test substrate. In the absence of ATP, only oligopeptides shorter than five residues are hydrolyzed (such as succinyl-Leu-Tyr-|-NHMec, and Leu-Tyr-Leu-|-Tyr-Trp, in which cleavage of the -Tyr-|-Leu- and -Tyr-|-Trp bonds also occurs).. Functionally, cleaves peptides in various proteins in a process that requires ATP hydrolysis. Has a chymotrypsin-like activity. Plays a major role in the degradation of misfolded proteins. In Methylobacillus flagellatus (strain ATCC 51484 / DSM 6875 / VKM B-1610 / KT), this protein is ATP-dependent Clp protease proteolytic subunit.